Reading from the N-terminus, the 142-residue chain is Hemoglobin subunit beta-1 (142 aa).

The region spanning 2-142 (SLTDEEIRLI…VTEALSCQYH (141 aa)) is the Globin domain. Positions 59 and 88 each coordinate heme b.

It belongs to the globin family. As to quaternary structure, heterotetramer of two alpha chains and two beta chains. Red blood cells.

Functionally, involved in oxygen transport from the lung to the various peripheral tissues. The chain is Hemoglobin subunit beta-1 (HBB1) from Torpedo marmorata (Marbled electric ray).